A 286-amino-acid polypeptide reads, in one-letter code: 3-hydroxyanthranilate 3,4-dioxygenase (286 aa).

Positions 1-160 (MERPVRVKAW…SEQYRTGKPN (160 aa)) are domain A (catalytic). R43 serves as a coordination point for O2. Residues H47, E53, and H91 each contribute to the Fe cation site. E53 lines the substrate pocket. Residues R95 and E105 each coordinate substrate. The segment at 161–177 (PDQLLKEPPFPLSTRSV) is linker. Residues 178 to 286 (MEPMCLEAWL…QDPACKKSLG (109 aa)) form a domain B region.

It belongs to the 3-HAO family. In terms of assembly, monomer. Requires Fe(2+) as cofactor.

The protein localises to the cytoplasm. Its subcellular location is the cytosol. It catalyses the reaction 3-hydroxyanthranilate + O2 = (2Z,4Z)-2-amino-3-carboxymuconate 6-semialdehyde. It functions in the pathway cofactor biosynthesis; NAD(+) biosynthesis; quinolinate from L-kynurenine: step 3/3. Its function is as follows. Catalyzes the oxidative ring opening of 3-hydroxyanthranilate to 2-amino-3-carboxymuconate semialdehyde, which spontaneously cyclizes to quinolinate. This is 3-hydroxyanthranilate 3,4-dioxygenase from Bos taurus (Bovine).